A 121-amino-acid polypeptide reads, in one-letter code: Protein AC4 (121 aa).

The interval 11-30 is disordered; sequence RGQSSNPHTSESQERNIQTG. Over residues 12–30 the composition is skewed to polar residues; it reads GQSSNPHTSESQERNIQTG.

Belongs to the geminiviridae protein AC4/C4 family.

In terms of biological role, pathogenicity determinant. May act as a suppressor of RNA-mediated gene silencing, also known as post-transcriptional gene silencing (PTGS), a mechanism of plant viral defense that limits the accumulation of viral RNAs. The protein is Protein AC4 of Cabbage leaf curl virus (isolate Jamaica) (CaLCuV).